Here is a 37-residue protein sequence, read N- to C-terminus: Large ribosomal subunit protein bL36 (37 aa).

This sequence belongs to the bacterial ribosomal protein bL36 family.

The sequence is that of Large ribosomal subunit protein bL36 from Dechloromonas aromatica (strain RCB).